A 461-amino-acid polypeptide reads, in one-letter code: Growth/differentiation factor 7 (461 aa).

The first 19 residues, 1 to 19 (MDLSAAAALCLWLLSACRP), serve as a signal peptide directing secretion. The propeptide occupies 20 to 315 (RDGLEAAAVL…ANLGGRRRRR (296 aa)). Asn79 is a glycosylation site (N-linked (GlcNAc...) asparagine). The disordered stretch occupies residues 287–360 (LRAAAEPPPD…GHGRRGRSRC (74 aa)). Gly residues predominate over residues 323 to 350 (GAQGSGGGGGGGGGGGGGGGGGGGGAGR). The span at 351–360 (GHGRRGRSRC) shows a compositional bias: basic residues. 3 disulfide bridges follow: Cys360–Cys426, Cys389–Cys458, and Cys393–Cys460.

It belongs to the TGF-beta family. In terms of assembly, homodimer; disulfide-linked.

The protein localises to the secreted. The polypeptide is Growth/differentiation factor 7 (Gdf7) (Mus musculus (Mouse)).